The chain runs to 565 residues: DNA mismatch repair protein MutL (565 aa).

The protein belongs to the DNA mismatch repair MutL/HexB family.

This protein is involved in the repair of mismatches in DNA. It is required for dam-dependent methyl-directed DNA mismatch repair. May act as a 'molecular matchmaker', a protein that promotes the formation of a stable complex between two or more DNA-binding proteins in an ATP-dependent manner without itself being part of a final effector complex. The sequence is that of DNA mismatch repair protein MutL from Desulforudis audaxviator (strain MP104C).